We begin with the raw amino-acid sequence, 78 residues long: Calcium/calmodulin-dependent protein kinase II inhibitor 1 (78 aa).

Residues 41-68 (SKRPPKLGQIGRSKRVVIEDDRIDDVLK) form a CAMK2 inhibitory domain region.

Belongs to the CAMK2N family. In terms of assembly, interacts with CAMK2B; the presence of Ca(2+)/calmodulin increases the interaction but is not essential. Interacts with CAMK2A; this interaction requires CAMK2A activation by Ca(2+). As to expression, expressed in the brain (at protein level). Expressed in cardiomyocytes but not cardiac fibroblasts (at protein level).

The protein resides in the synapse. It is found in the cell projection. The protein localises to the dendrite. Its subcellular location is the postsynaptic density. Potent and specific inhibitor of CaM-kinase II (CAMK2). Plays a role in the maintenance of long-term retrieval-induced memory in response to contextual fear. Modulates blood pressure and vascular reactivity via regulation of CAMK2 activity in addition to regulation of left ventricular mass. Mediates the NLRP3 inflammasome in cardiomyocytes via acting as an inhibitor of the MAPK14/p38 and MAPK8/JNK pathways, thereby regulating ventricular remodeling and cardiac rhythm post-myocardial infarction. Negatively effects insulin sensitivity and promotes lipid formation in adipose tissues independent of CAMK2 signaling. The protein is Calcium/calmodulin-dependent protein kinase II inhibitor 1 (Camk2n1) of Mus musculus (Mouse).